We begin with the raw amino-acid sequence, 793 residues long: 3',5'-cyclic-nucleotide phosphodiesterase regA (793 aa).

The interval 1 to 153 (MNNKQEEIDQ…SSHRVSDFSD (153 aa)) is disordered. Composition is skewed to low complexity over residues 13–34 (SSTS…DSTS), 54–69 (NKNN…SNNN), and 80–121 (NNSS…NNNN). Residues 161 to 280 (RILVADDDDV…LLKKKIDTVL (120 aa)) form the Response regulatory domain. 4-aspartylphosphate is present on Asp212. The region spanning 410–733 (RRNSIPTFPQ…ENWQAYMELQ (324 aa)) is the PDEase domain. His487 functions as the Proton donor in the catalytic mechanism. Residues His491, His527, Asp528, and Asp639 each coordinate a divalent metal cation. The tract at residues 756-793 (KLPKIDEEENRDKVSSSSSSSTAPLTSTSSSNNETSSS) is disordered. Over residues 770–793 (SSSSSSSTAPLTSTSSSNNETSSS) the composition is skewed to low complexity.

Belongs to the cyclic nucleotide phosphodiesterase family. Requires a divalent metal cation as cofactor. Post-translationally, the phosphorelay mechanism involves the sequential transfer of a phosphate group from Asp-212 of pde2 to 'His-65' of rdeA. Phosphorylation of Asp-212 activates the phosphodiesterase domain.

Its subcellular location is the cytoplasm. The protein localises to the cytosol. The catalysed reaction is 3',5'-cyclic AMP + H2O = AMP + H(+). With respect to regulation, inhibited by 3-isobutyl-1-methylxanthine (IBMX). In terms of biological role, phosphodiesterase specific for cAMP. Involved in the degradation of intracellular cAMP. Morphological suppressor of tagB. Phosphorelay protein that accepts phosphate from rdeA or supplies phosphate from regA; depending on the relative concentration of the phosphodonor proteins. The sequence is that of 3',5'-cyclic-nucleotide phosphodiesterase regA (regA) from Dictyostelium discoideum (Social amoeba).